The following is a 141-amino-acid chain: Hemoglobin subunit alpha (141 aa).

One can recognise a Globin domain in the interval 1–141; the sequence is VLSASDKTNL…VSTVLTSKYR (141 aa). S3 carries the post-translational modification Phosphoserine. K7 bears the N6-succinyllysine mark. T8 carries the phosphothreonine modification. K11 bears the N6-succinyllysine mark. At K16 the chain carries N6-acetyllysine; alternate. N6-succinyllysine; alternate is present on K16. Residue Y24 is modified to Phosphotyrosine. At S35 the chain carries Phosphoserine. At K40 the chain carries N6-succinyllysine. At S49 the chain carries Phosphoserine. Residue H58 coordinates O2. H87 contributes to the heme b binding site. S102 bears the Phosphoserine mark. At T108 the chain carries Phosphothreonine. S124 carries the post-translational modification Phosphoserine. T134 and T137 each carry phosphothreonine. Position 138 is a phosphoserine (S138).

Belongs to the globin family. In terms of assembly, heterotetramer of two alpha chains and two beta chains. Red blood cells.

Involved in oxygen transport from the lung to the various peripheral tissues. The sequence is that of Hemoglobin subunit alpha from Blarina brevicauda (Northern short-tailed shrew).